Consider the following 524-residue polypeptide: Phenylalanine--tRNA ligase alpha subunit (524 aa).

Positions 362, 441, and 467 each coordinate L-phenylalanine.

Belongs to the class-II aminoacyl-tRNA synthetase family. Phe-tRNA synthetase alpha subunit type 2 subfamily. In terms of assembly, tetramer of two alpha and two beta subunits. Mg(2+) serves as cofactor.

It is found in the cytoplasm. The enzyme catalyses tRNA(Phe) + L-phenylalanine + ATP = L-phenylalanyl-tRNA(Phe) + AMP + diphosphate + H(+). In Methanopyrus kandleri (strain AV19 / DSM 6324 / JCM 9639 / NBRC 100938), this protein is Phenylalanine--tRNA ligase alpha subunit.